A 401-amino-acid chain; its full sequence is Tryptophan synthase beta chain (401 aa).

K91 carries the N6-(pyridoxal phosphate)lysine modification.

The protein belongs to the TrpB family. As to quaternary structure, tetramer of two alpha and two beta chains. It depends on pyridoxal 5'-phosphate as a cofactor.

It carries out the reaction (1S,2R)-1-C-(indol-3-yl)glycerol 3-phosphate + L-serine = D-glyceraldehyde 3-phosphate + L-tryptophan + H2O. Its pathway is amino-acid biosynthesis; L-tryptophan biosynthesis; L-tryptophan from chorismate: step 5/5. In terms of biological role, the beta subunit is responsible for the synthesis of L-tryptophan from indole and L-serine. This chain is Tryptophan synthase beta chain, found in Lactococcus lactis subsp. cremoris (strain SK11).